Consider the following 142-residue polypeptide: Large ribosomal subunit protein uL13 (142 aa).

The protein belongs to the universal ribosomal protein uL13 family. Part of the 50S ribosomal subunit.

In terms of biological role, this protein is one of the early assembly proteins of the 50S ribosomal subunit, although it is not seen to bind rRNA by itself. It is important during the early stages of 50S assembly. This is Large ribosomal subunit protein uL13 from Cellvibrio japonicus (strain Ueda107) (Pseudomonas fluorescens subsp. cellulosa).